A 264-amino-acid polypeptide reads, in one-letter code: MVKSHIGSWILVLFVAMWSDVGLCKKRPKPGGGWNTGGSRYPGQGSPGGNRYPPQGGGGWGQPHGGGWGQPHGGGWGQPHGGGWGQPHGGGWGQPHGGGGWGQGGTHSQWNKPSKPKTNMKHVAGAAAAGAVVGGLGGYMLGSAMSRPLIHFGNDYEDRYYRENMYRYPNQVYYRPVDQYSNQNNFVHDCVNITVKQHTVTTTTKGENFTETDIKMMERVVEQMCITQYQRESQAYYQRGASVILFSSPPVILLISFLIFLIVG.

An N-terminal signal peptide occupies residues 1–24; sequence MVKSHIGSWILVLFVAMWSDVGLC. Residues 25 to 241 form an interaction with GRB2, ERI3 and SYN1 region; that stretch reads KKRPKPGGGW…ESQAYYQRGA (217 aa). The tract at residues 28 to 119 is disordered; sequence PKPGGGWNTG…WNKPSKPKTN (92 aa). 6 repeat units span residues 54–62, 63–70, 71–78, 79–86, 87–94, and 95–103. The tract at residues 54-103 is 6 X 8 AA tandem repeats of P-H-G-G-G-W-G-Q; sequence PQGGGGWGQPHGGGWGQPHGGGWGQPHGGGWGQPHGGGWGQPHGGGGWGQ. Positions 55–105 are enriched in gly residues; it reads QGGGGWGQPHGGGWGQPHGGGWGQPHGGGWGQPHGGGWGQPHGGGGWGQGG. Histidine 72, glycine 73, glycine 74, histidine 80, glycine 81, glycine 82, histidine 88, glycine 89, glycine 90, histidine 96, glycine 98, and glycine 99 together coordinate Cu(2+). The cysteines at positions 190 and 225 are disulfide-linked. Residues asparagine 192 and asparagine 208 are each glycosylated (N-linked (GlcNAc...) asparagine). Alanine 241 is lipidated: GPI-anchor amidated alanine. Residues 242–264 constitute a propeptide, removed in mature form; the sequence is SVILFSSPPVILLISFLIFLIVG.

The protein belongs to the prion family. As to quaternary structure, monomer and homodimer. Has a tendency to aggregate into amyloid fibrils containing a cross-beta spine, formed by a steric zipper of superposed beta-strands. Soluble oligomers may represent an intermediate stage on the path to fibril formation. Copper binding may promote oligomerization. Interacts with GRB2, APP, ERI3/PRNPIP and SYN1. Mislocalized cytosolically exposed PrP interacts with MGRN1; this interaction alters MGRN1 subcellular location and causes lysosomal enlargement. Interacts with KIAA1191.

Its subcellular location is the cell membrane. It is found in the golgi apparatus. Its function is as follows. Its primary physiological function is unclear. Has cytoprotective activity against internal or environmental stresses. May play a role in neuronal development and synaptic plasticity. May be required for neuronal myelin sheath maintenance. May play a role in iron uptake and iron homeostasis. Soluble oligomers are toxic to cultured neuroblastoma cells and induce apoptosis (in vitro). Association with GPC1 (via its heparan sulfate chains) targets PRNP to lipid rafts. Also provides Cu(2+) or Zn(2+) for the ascorbate-mediated GPC1 deaminase degradation of its heparan sulfate side chains. This is Major prion protein (PRNP) from Antilope cervicapra (Blackbuck).